A 95-amino-acid polypeptide reads, in one-letter code: Selenoprotein K (95 aa).

A helical membrane pass occupies residues 20-42; the sequence is LSFLTDMFWGITDFIVMFFQSII. The disordered stretch occupies residues 48–95; it reads RRGCQNSSSRTRFDDGRGPPGNPRRRMGRIDHNSGPNAPPMSGGGUGR. U93 is a non-standard amino acid (selenocysteine).

Belongs to the selenoprotein K family.

The protein resides in the endoplasmic reticulum membrane. It localises to the cell membrane. Functionally, required for Ca(2+) flux in immune cells and plays a role in T-cell proliferation and in T-cell and neutrophil migration. Involved in endoplasmic reticulum-associated degradation (ERAD) of soluble glycosylated proteins. Required for cell surface expression of CD36 and involved in macrophage uptake of low-density lipoprotein and in foam cell formation. Required for palmitoylation. This Xenopus tropicalis (Western clawed frog) protein is Selenoprotein K (selenok).